The chain runs to 131 residues: MELVNILLESESERVKLYYDIPPKKSLRTKCEVDRAVKYFISVIKKYIKLKESTFYVVVKDTTLFTYKYDKGELTPVDNTYYTFSKELASTDYSSSEITSICFTITDDMSISVKPKTGYIVKVRSDNSRYY.

Belongs to the chordopoxvirinae E11 family.

The protein resides in the virion. The polypeptide is Protein E11 homolog (Fowlpox virus (strain NVSL) (FPV)).